The primary structure comprises 160 residues: Large ribosomal subunit protein eL21 (160 aa).

It belongs to the eukaryotic ribosomal protein eL21 family.

The sequence is that of Large ribosomal subunit protein eL21 (rpl21) from Dictyostelium discoideum (Social amoeba).